The primary structure comprises 136 residues: Magnetite biomineralization protein Mms6 (136 aa).

Topologically, residues 1–85 (MGEMEREGAT…AVGGTIWSGK (85 aa)) are cytoplasmic. Positions 86–95 (GLALGLGMGL) are GL repeat. Residues 86 to 106 (GLALGLGMGLGAWGPLILGVV) traverse the membrane as a helical segment. Topologically, residues 107–136 (GAGAVYAYMKSRDIEAAQSDEEVELRDALS) are lumenal. Positions 115–136 (MKSRDIEAAQSDEEVELRDALS) are MIC, self-assembles, binds magnetite, Fe(2+) and Fe(3+).

This sequence belongs to the magnetosome Mms6 family. As to quaternary structure, full length protein oligomerizes and interacts with MamA. In terms of processing, may undergo cleavage.

The protein resides in the magnetosome membrane. Promotes the formation of magnetite in Fe(2+)-rich conditions, when magnetite is not readily formed. Binds both Fe(2+) and Fe(3+). May help control the production of crystals with a specific morphology. May function with MamX, MamY amd MamZ in biomineralization. The 4 genes of this operon collectively influence magnetosome size and number. The sequence is that of Magnetite biomineralization protein Mms6 from Magnetospirillum gryphiswaldense (strain DSM 6361 / JCM 21280 / NBRC 15271 / MSR-1).